The primary structure comprises 271 residues: Aquaporin-11 (271 aa).

Over 1–14 (MSALLGLPPEVQDT) the chain is Cytoplasmic. The helical transmembrane segment at 15-35 (CISLGLMLLVVLFMGLARVIA) threads the bilayer. The Lumenal segment spans residues 36–41 (RQQLHR). Residues 42–62 (PMVHAFVLEFLATFQLCYCTH) form a helical membrane-spanning segment. At 63–76 (ELQLLSEQDSGHPT) the chain is on the cytoplasmic side. A helical transmembrane segment spans residues 77–97 (WTLTLIYFFSLVHGLTLVGTA). The Lumenal segment spans residues 98–166 (SNPCGVMMQM…NPINTDISKA (69 aa)). The short motif at 99 to 101 (NPC) is the NPC element. A helical membrane pass occupies residues 167–187 (IIIEAICSFIFHSALLHFQEV). The Cytoplasmic portion of the chain corresponds to 188 to 194 (RTKLRIH). Residues 195–215 (VLAALITFLAYAGGSLTGALF) form a helical membrane-spanning segment. Positions 216 to 218 (NPA) match the NPA motif. The Lumenal portion of the chain corresponds to 216-234 (NPALALSLHFPCFDESFYK). Residues 235–255 (FFVVYWVAPSLGVLLMILMFS) form a helical membrane-spanning segment. The Cytoplasmic portion of the chain corresponds to 256–271 (FFLPWLHNNQLSNKKE).

This sequence belongs to the MIP/aquaporin (TC 1.A.8) family. AQP11/AQP12 subfamily. In terms of assembly, homodimer; disulfide-linked. Homotetramer. Can also form homomultimer. Not glycosylated. As to expression, expressed in retina specifically at retinal Mueller glial cells. Expressed in adult testis, in the elongated spermatids (ES) and in residual bodies inside Sertoli cells.

It is found in the endoplasmic reticulum membrane. It localises to the cytoplasmic vesicle membrane. Its subcellular location is the cell membrane. It carries out the reaction H2O(in) = H2O(out). The catalysed reaction is glycerol(in) = glycerol(out). It catalyses the reaction H2O2(out) = H2O2(in). Functionally, channel protein that facilitates the transport of water, glycerol and hydrogen peroxide across membrane of cell or organelles guaranteeing intracellular homeostasis in several organes like liver, kidney and brain. In situation of stress, participates in endoplasmic reticulum (ER) homeostasis by regulating redox homeostasis through the transport of hydrogen peroxide across the endoplasmic reticulum membrane thereby regulating the oxidative stress through the NADPH oxidase 2 pathway. Plays a role by maintaining an environment suitable for translation or protein foldings in the ER lumen namely by participating in the PKD1 glycosylation processing resulting in regulation of PKD1 membrane trafficking thereby preventing the accumulation of unfolding protein in ER. Plays a role in the proximal tubule function by regulating its endosomal acidification. May play a role in postnatal kidney development. This chain is Aquaporin-11, found in Rattus norvegicus (Rat).